The sequence spans 262 residues: Ornithine carbamoyltransferase (262 aa).

Residues 3–7 (STRTR), Gln30, Arg54, and 81–84 (HPTQ) each bind carbamoyl phosphate. L-ornithine contacts are provided by residues Asn114, Asp178, and 182 to 183 (SM). Carbamoyl phosphate-binding positions include 219–222 (HCLP) and Thr247.

The protein belongs to the aspartate/ornithine carbamoyltransferase superfamily. OTCase family.

The protein localises to the cytoplasm. It carries out the reaction carbamoyl phosphate + L-ornithine = L-citrulline + phosphate + H(+). It participates in amino-acid biosynthesis; L-arginine biosynthesis; L-arginine from L-ornithine and carbamoyl phosphate: step 1/3. The sequence is that of Ornithine carbamoyltransferase (argF) from Neisseria cinerea.